The chain runs to 236 residues: Purine nucleoside phosphorylase DeoD-type (236 aa).

Position 4 (His4) interacts with a purine D-ribonucleoside. Phosphate contacts are provided by residues Gly20, Arg24, Arg43, and 87–90 (RVGS). A purine D-ribonucleoside is bound by residues 179–181 (EME) and 203–204 (SD). Asp204 (proton donor) is an active-site residue.

The protein belongs to the PNP/UDP phosphorylase family. In terms of assembly, homohexamer; trimer of homodimers.

The catalysed reaction is a purine D-ribonucleoside + phosphate = a purine nucleobase + alpha-D-ribose 1-phosphate. It catalyses the reaction a purine 2'-deoxy-D-ribonucleoside + phosphate = a purine nucleobase + 2-deoxy-alpha-D-ribose 1-phosphate. Catalyzes the reversible phosphorolytic breakdown of the N-glycosidic bond in the beta-(deoxy)ribonucleoside molecules, with the formation of the corresponding free purine bases and pentose-1-phosphate. This chain is Purine nucleoside phosphorylase DeoD-type, found in Limosilactobacillus reuteri (strain DSM 20016) (Lactobacillus reuteri).